A 278-amino-acid polypeptide reads, in one-letter code: HTH-type transcriptional activator RhaS (278 aa).

Positions 174–272 (NLLLAWLEDH…NWSPRDIRQG (99 aa)) constitute an HTH araC/xylS-type domain. 2 DNA-binding regions (H-T-H motif) span residues 191–212 (DAVA…KQKT) and 239–262 (VTDI…RREF).

Binds DNA as a dimer.

It is found in the cytoplasm. Activates expression of the rhaBAD and rhaT operons. This Escherichia coli O45:K1 (strain S88 / ExPEC) protein is HTH-type transcriptional activator RhaS.